The primary structure comprises 318 residues: Malate dehydrogenase (318 aa).

Residues 10 to 15 (GAGNIG) and aspartate 34 contribute to the NAD(+) site. Residues arginine 83 and arginine 89 each coordinate substrate. Residues asparagine 96 and 119 to 121 (ITN) each bind NAD(+). The substrate site is built by asparagine 121 and arginine 152. Catalysis depends on histidine 176, which acts as the Proton acceptor.

Belongs to the LDH/MDH superfamily. MDH type 3 family.

It carries out the reaction (S)-malate + NAD(+) = oxaloacetate + NADH + H(+). Functionally, catalyzes the reversible oxidation of malate to oxaloacetate. The protein is Malate dehydrogenase of Rhodospirillum rubrum (strain ATCC 11170 / ATH 1.1.1 / DSM 467 / LMG 4362 / NCIMB 8255 / S1).